A 169-amino-acid polypeptide reads, in one-letter code: Peptide deformylase (169 aa).

Fe cation is bound by residues Cys91 and His133. Residue Glu134 is part of the active site. His137 contacts Fe cation.

The protein belongs to the polypeptide deformylase family. Fe(2+) is required as a cofactor.

It carries out the reaction N-terminal N-formyl-L-methionyl-[peptide] + H2O = N-terminal L-methionyl-[peptide] + formate. Its function is as follows. Removes the formyl group from the N-terminal Met of newly synthesized proteins. Requires at least a dipeptide for an efficient rate of reaction. N-terminal L-methionine is a prerequisite for activity but the enzyme has broad specificity at other positions. The sequence is that of Peptide deformylase from Escherichia coli (strain K12 / DH10B).